The following is a 239-amino-acid chain: Uridylate kinase (239 aa).

12–15 contacts ATP; that stretch reads KLSG. Position 53 (glycine 53) interacts with UMP. Glycine 54 and arginine 58 together coordinate ATP. UMP contacts are provided by residues aspartate 73 and 135–142; that span reads TGSPCFTT. Positions 162, 168, and 171 each coordinate ATP.

It belongs to the UMP kinase family. In terms of assembly, homohexamer.

It localises to the cytoplasm. The catalysed reaction is UMP + ATP = UDP + ADP. Its pathway is pyrimidine metabolism; CTP biosynthesis via de novo pathway; UDP from UMP (UMPK route): step 1/1. Its activity is regulated as follows. Inhibited by UTP. Its function is as follows. Catalyzes the reversible phosphorylation of UMP to UDP. The sequence is that of Uridylate kinase from Ruthia magnifica subsp. Calyptogena magnifica.